The sequence spans 243 residues: Protein GIGAS CELL1 (243 aa).

Interacts with APC/C activators such as FZR1, FZR2, FZR3, CDC20.1 and CDC20.5. In terms of processing, phosphorylated by CDKA-1 in complex with CYCA1-2. Expressed in rapidly dividing tissues such as shoot apical meristem and young leaves. Associated with cell division but also with specific cell types.

Negative regulator of the anaphase-promoting complex/cyclosome (APC/C) ubiquitin ligase required for proper mitotic and meiotic progression and cell fate determination. Involved in entry into both meiosis I and meiosis II. Prevents endomitosis by preferentially inhibiting APC/C(CDC20). Required for megagametophyte and endosperm development. Triggers mitotic cyclins (e.g. CYCB1-1 and CYCB1-2) accumulation. Confers immunity to bacterial pathogens (e.g. Pseudomonas syringae pv. tomato DC3000), which is associated with increased expression of disease resistance (R) genes. GIG1 and PANS1 are part of a network linking centromere cohesion and cell cycle progression through control of APC/C activity. The chain is Protein GIGAS CELL1 (GIG1) from Arabidopsis thaliana (Mouse-ear cress).